Here is a 469-residue protein sequence, read N- to C-terminus: REPADAAVREKRAKIKEMMEHAWNSYKRYAWGLNELKPITKEGHSSSLFGTIKGATIVDALDTLFIMGMESEFQEAKSWIAENLDFNVNAEISVFEVNIRFVGGLLSAYYLSGEEIFRKKAVELGIKLLPAFHTPSGIPWALLNIKSGIGRNWPWASGGSSILAEFGTLHLEFMHLSHLSGNPIFAEKVMNIRKVLNKLEKPEGLYPNYLNPSSGQWGQHHVSIGGLGDSFYEYLLKAWLMSEKTDLEAKKMYFDAVQAIETHLIRKSSGGLTYIAEWKGGLLEHKMGHLTCFAGGMFALGADGAPEGRAQHYLELGAEIARTCHESYNRTFMKLGPEAFRFDGGVEAIATRQNEKYYILRPEVVETYMYMWRLTHDPKYRKWAWEAVEALESHCRVNGGYSGLRDVYFTHEKYDNVQQSFFLAETLKYLYLIFSDDDLLPLEHWIFNTEAHLLPILPTDQKEVEVKVK.

At 1–469 the chain is on the lumenal side; sequence REPADAAVRE…DQKEVEVKVK (469 aa). Residues cysteine 292 and cysteine 324 are joined by a disulfide bond. An N-linked (GlcNAc...) asparagine glycan is attached at asparagine 329. Glutamate 338 functions as the Proton donor in the catalytic mechanism. Threonine 449 serves as a coordination point for Ca(2+).

It belongs to the glycosyl hydrolase 47 family. Requires Ca(2+) as cofactor.

The protein localises to the golgi apparatus membrane. It catalyses the reaction N(4)-(alpha-D-Man-(1-&gt;2)-alpha-D-Man-(1-&gt;2)-alpha-D-Man-(1-&gt;3)-[alpha-D-Man-(1-&gt;2)-alpha-D-Man-(1-&gt;3)-[alpha-D-Man-(1-&gt;2)-alpha-D-Man-(1-&gt;6)]-alpha-D-Man-(1-&gt;6)]-beta-D-Man-(1-&gt;4)-beta-D-GlcNAc-(1-&gt;4)-beta-D-GlcNAc)-L-asparaginyl-[protein] (N-glucan mannose isomer 9A1,2,3B1,2,3) + 4 H2O = N(4)-(alpha-D-Man-(1-&gt;3)-[alpha-D-Man-(1-&gt;3)-[alpha-D-Man-(1-&gt;6)]-alpha-D-Man-(1-&gt;6)]-beta-D-Man-(1-&gt;4)-beta-D-GlcNAc-(1-&gt;4)-beta-D-GlcNAc)-L-asparaginyl-[protein] (N-glucan mannose isomer 5A1,2) + 4 beta-D-mannose. The enzyme catalyses N(4)-(alpha-D-Man-(1-&gt;2)-alpha-D-Man-(1-&gt;2)-alpha-D-Man-(1-&gt;3)-[alpha-D-Man-(1-&gt;3)-[alpha-D-Man-(1-&gt;2)-alpha-D-Man-(1-&gt;6)]-alpha-D-Man-(1-&gt;6)]-beta-D-Man-(1-&gt;4)-beta-D-GlcNAc-(1-&gt;4)-beta-D-GlcNAc)-L-asparaginyl-[protein] (N-glucan mannose isomer 8A1,2,3B1,3) + 3 H2O = N(4)-(alpha-D-Man-(1-&gt;3)-[alpha-D-Man-(1-&gt;3)-[alpha-D-Man-(1-&gt;6)]-alpha-D-Man-(1-&gt;6)]-beta-D-Man-(1-&gt;4)-beta-D-GlcNAc-(1-&gt;4)-beta-D-GlcNAc)-L-asparaginyl-[protein] (N-glucan mannose isomer 5A1,2) + 3 beta-D-mannose. Its pathway is protein modification; protein glycosylation. Its activity is regulated as follows. Inhibited by both 1-deoxymannojirimycin and kifunensine. In terms of biological role, involved in the maturation of Asn-linked oligosaccharides. Progressively trim alpha-1,2-linked mannose residues from Man(9)GlcNAc(2) to produce Man(5)GlcNAc(2). This is Mannosyl-oligosaccharide 1,2-alpha-mannosidase IA (MAN1A1) from Oryctolagus cuniculus (Rabbit).